The following is a 491-amino-acid chain: MTENLQSESIPHEILPKEPFDLPMNNLKSSPKNKDSEKRINNSIAESEQVVDSALSNPETNANEDIIAPQLPSQNSEIIEKNSPVNKLNSSTSLTTHQLASLPKLEVTDHDNVSEAETVVLNEDEEKETSLVGSVSVTEDLGDSSAIGRTILVNNSVEPQMENTANITIVSPSLKESDFESEEKATNDNNGLIETNHNSKLEESSEHEEEEDEESNIERTEDSDHQIPQRGGTLEAPRKGGPRSGVGSRKRKRATVSRKWSTNSESKIKRVALETSQEESDREIADRRSASEQAHEADDEKAIKRKEAFDALLNIETEFTFLRNRLYGKKLLKLNEHEEMIQNETHERFNACIDLITERRDDRVRLATENLMKQLGNIKNVMDYVTKQRKYQLLFDKRRIRQALLTKIATKCFQLLNKQKSVHDPTYITQKTMSYRQSALLQKQRIEYEAAVLCELNSFAGFPTAPIIETASFDDIRNDLLEMGCLSENQD.

Disordered stretches follow at residues 1 to 74 (MTEN…LPSQ) and 155 to 301 (NSVE…DDEK). Residues 10 to 20 (IPHEILPKEPF) are compositionally biased toward basic and acidic residues. Polar residues-rich tracts occupy residues 54–63 (ALSNPETNAN) and 155–171 (NSVE…TIVS). Over residues 175–186 (KESDFESEEKAT) the composition is skewed to basic and acidic residues. Residues 187 to 196 (NDNNGLIETN) are compositionally biased toward polar residues. S204 bears the Phosphoserine mark. Residues 205-215 (SEHEEEEDEES) are compositionally biased toward acidic residues. Basic and acidic residues-rich tracts occupy residues 216–227 (NIERTEDSDHQI) and 282–301 (REIA…DDEK). S223 is subject to Phosphoserine.

As to quaternary structure, component of the RPD3C(L) complex.

It is found in the nucleus. Functionally, component of the RPD3C(L) histone deacetylase complex (HDAC) responsible for the deacetylation of lysine residues on the N-terminal part of the core histones (H2A, H2B, H3 and H4). Histone deacetylation gives a tag for epigenetic repression and plays an important role in transcriptional regulation, cell cycle progression and developmental events. This is Transcriptional regulatory protein dep1 (dep1) from Schizosaccharomyces pombe (strain 972 / ATCC 24843) (Fission yeast).